We begin with the raw amino-acid sequence, 406 residues long: Phosphorylase b kinase gamma catalytic chain, liver/testis isoform (406 aa).

Residues 24 to 291 (YDPKDVIGRG…AEQALQHPFF (268 aa)) enclose the Protein kinase domain. Residues 30–38 (IGRGVSSVV) and K53 contribute to the ATP site. Residue D153 is the Proton acceptor of the active site. Residues 306 to 330 (QRFRVAVWTVLAAGRVALSAHRIRP) form a calmodulin-binding (domain-N) region. The interval 346–370 (VRRLIDNCAFRLYGHWVKKGEQQNR) is calmodulin-binding (domain-C).

It belongs to the protein kinase superfamily. CAMK Ser/Thr protein kinase family. In terms of assembly, hexadecamer of 4 heterotetramers, each composed of alpha, beta, gamma, and delta subunits. Alpha (PHKA1 or PHKA2) and beta (PHKB) are regulatory subunits, gamma (PHKG1 or PHKG2) is the catalytic subunit, and delta is calmodulin.

The catalysed reaction is 2 ATP + phosphorylase b = 2 ADP + phosphorylase a.. Its function is as follows. Catalytic subunit of the phosphorylase b kinase (PHK), which mediates the neural and hormonal regulation of glycogen breakdown (glycogenolysis) by phosphorylating and thereby activating glycogen phosphorylase. May regulate glycogeneolysis in the testis. In vitro, phosphorylates PYGM. The sequence is that of Phosphorylase b kinase gamma catalytic chain, liver/testis isoform (PHKG2) from Bos taurus (Bovine).